The sequence spans 152 residues: D-aminoacyl-tRNA deacylase (152 aa).

The Gly-cisPro motif, important for rejection of L-amino acids signature appears at 142–143 (GP).

It belongs to the DTD family. As to quaternary structure, homodimer.

Its subcellular location is the cytoplasm. The enzyme catalyses glycyl-tRNA(Ala) + H2O = tRNA(Ala) + glycine + H(+). The catalysed reaction is a D-aminoacyl-tRNA + H2O = a tRNA + a D-alpha-amino acid + H(+). An aminoacyl-tRNA editing enzyme that deacylates mischarged D-aminoacyl-tRNAs. Also deacylates mischarged glycyl-tRNA(Ala), protecting cells against glycine mischarging by AlaRS. Acts via tRNA-based rather than protein-based catalysis; rejects L-amino acids rather than detecting D-amino acids in the active site. By recycling D-aminoacyl-tRNA to D-amino acids and free tRNA molecules, this enzyme counteracts the toxicity associated with the formation of D-aminoacyl-tRNA entities in vivo and helps enforce protein L-homochirality. The protein is D-aminoacyl-tRNA deacylase of Paraburkholderia xenovorans (strain LB400).